We begin with the raw amino-acid sequence, 600 residues long: Elongation factor 4 (600 aa).

Residues 6–188 (KLIRNFSIIA…AVVERIPAPK (183 aa)) enclose the tr-type G domain. GTP contacts are provided by residues 18 to 23 (DHGKST) and 135 to 138 (NKID).

This sequence belongs to the TRAFAC class translation factor GTPase superfamily. Classic translation factor GTPase family. LepA subfamily.

Its subcellular location is the cell inner membrane. The enzyme catalyses GTP + H2O = GDP + phosphate + H(+). Required for accurate and efficient protein synthesis under certain stress conditions. May act as a fidelity factor of the translation reaction, by catalyzing a one-codon backward translocation of tRNAs on improperly translocated ribosomes. Back-translocation proceeds from a post-translocation (POST) complex to a pre-translocation (PRE) complex, thus giving elongation factor G a second chance to translocate the tRNAs correctly. Binds to ribosomes in a GTP-dependent manner. The polypeptide is Elongation factor 4 (Sorangium cellulosum (strain So ce56) (Polyangium cellulosum (strain So ce56))).